Reading from the N-terminus, the 541-residue chain is Membrane protein insertase YidC (541 aa).

The next 6 helical transmembrane spans lie at 6–26 (NILL…WQAD), 325–345 (LVVD…LLMF), 349–369 (FVGN…GLLF), 420–440 (GGCL…WVLL), 457–477 (LSVQ…MFIM), and 500–520 (VIFT…WLVG).

Belongs to the OXA1/ALB3/YidC family. Type 1 subfamily. As to quaternary structure, interacts with the Sec translocase complex via SecD. Specifically interacts with transmembrane segments of nascent integral membrane proteins during membrane integration.

The protein localises to the cell inner membrane. Required for the insertion and/or proper folding and/or complex formation of integral membrane proteins into the membrane. Involved in integration of membrane proteins that insert both dependently and independently of the Sec translocase complex, as well as at least some lipoproteins. Aids folding of multispanning membrane proteins. This Shewanella sp. (strain W3-18-1) protein is Membrane protein insertase YidC.